The primary structure comprises 242 residues: Venom redulysin 2 (242 aa).

Positions 1-19 (MSKIWILLLLVGAVQFARG) are cleaved as a signal peptide. A propeptide spanning residues 20-46 (FPALEEEQEDDVIDWPSFEYDLSDEER) is cleaved from the precursor.

Belongs to the redulysin-like family. Contains 5 disulfide bonds. In terms of tissue distribution, expressed by the venom gland (posterior main gland) (at protein level).

Its subcellular location is the secreted. In terms of biological role, highly abundant protein that may be responsible for the observed disruption of sensory neuron membranes, since it is homologous to proteins such as trialysin, which forms pores in lipid bilayers. Probable insecticidal toxin. This Platymeris rhadamanthus (Red spot assassin bug) protein is Venom redulysin 2.